The chain runs to 702 residues: Ribosomal RNA large subunit methyltransferase K/L (702 aa).

The THUMP domain maps to 43-154 (LVYQSLMWSR…KETASIALDL (112 aa)).

It belongs to the methyltransferase superfamily. RlmKL family.

Its subcellular location is the cytoplasm. The catalysed reaction is guanosine(2445) in 23S rRNA + S-adenosyl-L-methionine = N(2)-methylguanosine(2445) in 23S rRNA + S-adenosyl-L-homocysteine + H(+). It catalyses the reaction guanosine(2069) in 23S rRNA + S-adenosyl-L-methionine = N(2)-methylguanosine(2069) in 23S rRNA + S-adenosyl-L-homocysteine + H(+). In terms of biological role, specifically methylates the guanine in position 2445 (m2G2445) and the guanine in position 2069 (m7G2069) of 23S rRNA. In Shigella boydii serotype 18 (strain CDC 3083-94 / BS512), this protein is Ribosomal RNA large subunit methyltransferase K/L.